A 141-amino-acid chain; its full sequence is Hemoglobin subunit alpha-A/Q/R/T (141 aa).

One can recognise a Globin domain in the interval 1 to 141 (VLSPADKTNV…VSTVLTSKYR (141 aa)). Ser3 is subject to Phosphoserine. Lys7 bears the N6-succinyllysine mark. Thr8 bears the Phosphothreonine mark. At Lys11 the chain carries N6-succinyllysine. N6-acetyllysine; alternate is present on Lys16. N6-succinyllysine; alternate is present on Lys16. Phosphotyrosine is present on Tyr24. Ser35 is modified (phosphoserine). Lys40 carries the N6-succinyllysine modification. Ser49 is subject to Phosphoserine. Residue His58 participates in O2 binding. Heme b is bound at residue His87. Phosphoserine is present on Ser102. Position 108 is a phosphothreonine (Thr108). Ser124 and Ser131 each carry phosphoserine. Phosphothreonine is present on residues Thr134 and Thr137. Ser138 carries the post-translational modification Phosphoserine.

The protein belongs to the globin family. In terms of assembly, heterotetramer of two alpha chains and two beta chains. As to expression, red blood cells.

Its function is as follows. Involved in oxygen transport from the lung to the various peripheral tissues. This chain is Hemoglobin subunit alpha-A/Q/R/T, found in Macaca fascicularis (Crab-eating macaque).